Reading from the N-terminus, the 122-residue chain is uncharacterized protein (122 aa).

This is an uncharacterized protein from Aquifex aeolicus (strain VF5).